The following is a 252-amino-acid chain: Neurotrophic factor BDNF precursor form (252 aa).

An N-terminal signal peptide occupies residues 1–18 (MTILFLTMVISYFGCMKA). Positions 19-133 (APMKEANVRG…AANMSMRVRR (115 aa)) are excised as a propeptide. Residues 43–62 (LESVNGPKAGSRGLTSSSSS) form a disordered region. N-linked (GlcNAc...) asparagine glycosylation occurs at N126. 3 disulfide bridges follow: C146–C213, C191–C242, and C201–C244.

The protein belongs to the NGF-beta family. As to quaternary structure, monomers and homodimers. Binds to NTRK2/TRKB. Can form heterodimers with other neurotrophin family members, such as NTF3 and NTF4 (in vitro), but the physiological relevance of this is not clear. BDNF precursor form: interacts with the heterodimer formed by NGFR and SORCS2. Mature BDNF has much lower affinity for the heterodimer formed by NGFR and SORCS2. In terms of processing, N-glycosylated and glycosulfated, contrary to mature BDNF. Mature BDNF is produced by proteolytic removal of the propeptide, catalyzed by a FURIN family member. In addition, the precursor form is proteolytically cleaved within the propeptide, but this is not an obligatory intermediate for the production of mature BDNF. Can be converted into mature BDNF by plasmin (PLG). As to expression, brain and central nervous system.

It localises to the secreted. In terms of biological role, important signaling molecule that activates signaling cascades downstream of NTRK2. During development, promotes the survival and differentiation of selected neuronal populations of the peripheral and central nervous systems. Participates in axonal growth, pathfinding and in the modulation of dendritic growth and morphology. Major regulator of synaptic transmission and plasticity at adult synapses in many regions of the CNS. The versatility of BDNF is emphasized by its contribution to a range of adaptive neuronal responses including long-term potentiation (LTP), long-term depression (LTD), certain forms of short-term synaptic plasticity, as well as homeostatic regulation of intrinsic neuronal excitability. Important signaling molecule that activates signaling cascades downstream of NTRK2. Activates signaling cascades via the heterodimeric receptor formed by NGFR and SORCS2. Signaling via NGFR and SORCS2 plays a role in synaptic plasticity and long-term depression (LTD). Binding to NGFR and SORCS2 promotes neuronal apoptosis. Promotes neuronal growth cone collapse. The chain is Neurotrophic factor BDNF precursor form (BDNF) from Sus scrofa (Pig).